Consider the following 577-residue polypeptide: Phosphoenolpyruvate-protein phosphotransferase (577 aa).

The active-site Tele-phosphohistidine intermediate is histidine 191. 2 residues coordinate phosphoenolpyruvate: arginine 298 and arginine 334. Residues glutamate 435 and aspartate 459 each contribute to the Mg(2+) site. Residues asparagine 458–aspartate 459 and arginine 469 contribute to the phosphoenolpyruvate site. The Proton donor role is filled by cysteine 506.

It belongs to the PEP-utilizing enzyme family. In terms of assembly, homodimer. The cofactor is Mg(2+).

The protein resides in the cytoplasm. The catalysed reaction is L-histidyl-[protein] + phosphoenolpyruvate = N(pros)-phospho-L-histidyl-[protein] + pyruvate. General (non sugar-specific) component of the phosphoenolpyruvate-dependent sugar phosphotransferase system (sugar PTS). This major carbohydrate active-transport system catalyzes the phosphorylation of incoming sugar substrates concomitantly with their translocation across the cell membrane. Enzyme I transfers the phosphoryl group from phosphoenolpyruvate (PEP) to the phosphoryl carrier protein (HPr). The protein is Phosphoenolpyruvate-protein phosphotransferase (ptsI) of Streptococcus equinus (Streptococcus bovis).